The primary structure comprises 346 residues: Melanoma-associated antigen B3 (346 aa).

A disordered region spans residues 1 to 35; sequence MPRGQKSTLHAREKRQQTRGQTQDHQGAQITATNK. The span at 18-33 shows a compositional bias: polar residues; that stretch reads TRGQTQDHQGAQITAT. The MAGE domain occupies 111–310; sequence LIMKTNMLVQ…SAFQFWYEEA (200 aa).

Expressed in testis.

This chain is Melanoma-associated antigen B3 (MAGEB3), found in Homo sapiens (Human).